Consider the following 349-residue polypeptide: Probable trehalose-phosphate phosphatase H (349 aa).

The protein belongs to the trehalose phosphatase family. A divalent metal cation is required as a cofactor.

It carries out the reaction alpha,alpha-trehalose 6-phosphate + H2O = alpha,alpha-trehalose + phosphate. Its pathway is glycan biosynthesis; trehalose biosynthesis. In terms of biological role, removes the phosphate from trehalose 6-phosphate to produce free trehalose. Trehalose accumulation in plant may improve abiotic stress tolerance. This chain is Probable trehalose-phosphate phosphatase H (TPPH), found in Arabidopsis thaliana (Mouse-ear cress).